The chain runs to 174 residues: Large ribosomal subunit protein uL10 (174 aa).

Belongs to the universal ribosomal protein uL10 family. Part of the ribosomal stalk of the 50S ribosomal subunit. The N-terminus interacts with L11 and the large rRNA to form the base of the stalk. The C-terminus forms an elongated spine to which L12 dimers bind in a sequential fashion forming a multimeric L10(L12)X complex.

Functionally, forms part of the ribosomal stalk, playing a central role in the interaction of the ribosome with GTP-bound translation factors. This is Large ribosomal subunit protein uL10 from Methylobacillus flagellatus (strain ATCC 51484 / DSM 6875 / VKM B-1610 / KT).